We begin with the raw amino-acid sequence, 306 residues long: MKPTKELLNEILHEVRPLIGRGKVANYIPALARVPAHKLAIAVYTNQGEVIKAGDADEAFSIQSISKALSLTLAMGLYQPDEIWRRVGKEPSGQAFNSLIQLEMEQGIPRNPFINAGAIVVADLLASRLSAPRQRLLEFVRQLSGETHICYDKVVAASEMMHSDRNAAIAYLMRSFGNFENEVIPVLNNYFHACALKMSCVDLAKTFSYLANKGVSVHTDQRVISPVQTKQLNALLATCGLYDGAGEFAYRVGMPGKSGVGGGIIAIVPGEMTIAVWSPELDPSGNSLAGTKALELLSERIGRSIF.

7 residues coordinate substrate: S64, N115, E159, N166, Y190, Y242, and V260.

This sequence belongs to the glutaminase family. Homotetramer.

The catalysed reaction is L-glutamine + H2O = L-glutamate + NH4(+). This chain is Glutaminase, found in Vibrio vulnificus (strain YJ016).